We begin with the raw amino-acid sequence, 443 residues long: Probable glycine dehydrogenase (decarboxylating) subunit 1 (443 aa).

It belongs to the GcvP family. N-terminal subunit subfamily. In terms of assembly, the glycine cleavage system is composed of four proteins: P, T, L and H. In this organism, the P 'protein' is a heterodimer of two subunits.

It catalyses the reaction N(6)-[(R)-lipoyl]-L-lysyl-[glycine-cleavage complex H protein] + glycine + H(+) = N(6)-[(R)-S(8)-aminomethyldihydrolipoyl]-L-lysyl-[glycine-cleavage complex H protein] + CO2. Functionally, the glycine cleavage system catalyzes the degradation of glycine. The P protein binds the alpha-amino group of glycine through its pyridoxal phosphate cofactor; CO(2) is released and the remaining methylamine moiety is then transferred to the lipoamide cofactor of the H protein. In Nitratidesulfovibrio vulgaris (strain DSM 19637 / Miyazaki F) (Desulfovibrio vulgaris), this protein is Probable glycine dehydrogenase (decarboxylating) subunit 1.